We begin with the raw amino-acid sequence, 170 residues long: Putative apoptosis inhibitor ORF87 (170 aa).

BIR repeat units lie at residues 22–92 (RIKS…PVGK) and 104–169 (RLKS…KLSS).

In terms of biological role, may act as an apoptosis inhibitor. The sequence is that of Putative apoptosis inhibitor ORF87 from Ostreid herpesvirus 1 (isolate France) (OsHV-1).